Reading from the N-terminus, the 115-residue chain is Ribonuclease P protein component (115 aa).

Belongs to the RnpA family. As to quaternary structure, consists of a catalytic RNA component (M1 or rnpB) and a protein subunit.

It catalyses the reaction Endonucleolytic cleavage of RNA, removing 5'-extranucleotides from tRNA precursor.. Its function is as follows. RNaseP catalyzes the removal of the 5'-leader sequence from pre-tRNA to produce the mature 5'-terminus. It can also cleave other RNA substrates such as 4.5S RNA. The protein component plays an auxiliary but essential role in vivo by binding to the 5'-leader sequence and broadening the substrate specificity of the ribozyme. In Bacillus cereus (strain Q1), this protein is Ribonuclease P protein component.